An 816-amino-acid polypeptide reads, in one-letter code: Probable transcriptional regulator SLK2 (816 aa).

Disordered stretches follow at residues 133–153 (HDPS…SQTN) and 166–189 (SFFQ…KQDD). Composition is skewed to polar residues over residues 139 to 153 (LGGS…SQTN) and 166 to 176 (SFFQDPNNLTQ). Positions 307 to 554 (PSESSIVYWR…DQKVGPIEAL (248 aa)) are dimerization. The short motif at 316 to 330 (RKFVTEYFSPRAKKR) is the Nuclear localization signal element. Polar residues-rich tracts occupy residues 644-662 (IQQE…QGTS) and 672-711 (PSIS…SGNQ). The tract at residues 644–711 (IQQEPSRNRS…QPPSCSSGNQ (68 aa)) is disordered.

This sequence belongs to the adn1/SEU family. As to quaternary structure, forms corepressor complexes with LUH; LUH is the transcription repressor subunit and SLK2 the specific DNA-binding adapters. In terms of tissue distribution, expressed in young flower meristems, ovules and the carpel margin meristem.

Its subcellular location is the nucleus. In terms of biological role, probable transcription regulator that functions in the development of the carpel margin meristem similarly to SEUSS (SEU). In association with SEU, supports organ development from meristematic regions by facilitating auxin response and thus organ initiation, and by sustaining meristematic potential through the maintenance of PHABULOSA expression. DNA-binding adapter subunit of the SEU-SLK2 transcriptional corepressor of abiotic stress (e.g. salt and osmotic stress) response genes. The chain is Probable transcriptional regulator SLK2 (SLK2) from Arabidopsis thaliana (Mouse-ear cress).